The sequence spans 117 residues: Protein Wnt-6 (117 aa).

The O-palmitoleoyl serine; by PORCN moiety is linked to residue Ser1. A disulfide bridge connects residues Cys83 and Cys98. Asn84 carries N-linked (GlcNAc...) asparagine glycosylation.

This sequence belongs to the Wnt family. In terms of processing, palmitoleoylation is required for efficient binding to frizzled receptors. Depalmitoleoylation leads to Wnt signaling pathway inhibition.

Its subcellular location is the secreted. The protein localises to the extracellular space. It localises to the extracellular matrix. In terms of biological role, ligand for members of the frizzled family of seven transmembrane receptors. Probable developmental protein. May be a signaling molecule which affects the development of discrete regions of tissues. Is likely to signal over only few cell diameters. The chain is Protein Wnt-6 (wnt6) from Thunnus thynnus (Atlantic bluefin tuna).